Reading from the N-terminus, the 511-residue chain is DnaJ homolog 1, mitochondrial (511 aa).

A mitochondrion-targeting transit peptide spans 1 to 55 (MAFQQGVLSRCSGVFRHHVGHSRHINNILYRHAIAFASIAPRIPKSSFHTSAIRN). The region spanning 59–127 (FKDPYDTLGL…RQQYDQFGPA (69 aa)) is the J domain. A CR-type zinc finger spans residues 217–297 (SKNVQLRFSA…CHGEGVQVNR (81 aa)). 4 CXXCXGXG motif repeats span residues 230–237 (CSTCSGTG), 247–254 (CSTCHGTG), 269–276 (CPTCNGEG), and 285–292 (CTKCHGEG).

Its subcellular location is the mitochondrion. Its function is as follows. Plays a role in mitochondrial biogenesis and protein folding. The chain is DnaJ homolog 1, mitochondrial (MDJ1) from Saccharomyces cerevisiae (strain ATCC 204508 / S288c) (Baker's yeast).